The primary structure comprises 94 residues: Large ribosomal subunit protein uL23 (94 aa).

This sequence belongs to the universal ribosomal protein uL23 family. In terms of assembly, part of the 50S ribosomal subunit. Contacts protein L29, and trigger factor when it is bound to the ribosome.

Functionally, one of the early assembly proteins it binds 23S rRNA. One of the proteins that surrounds the polypeptide exit tunnel on the outside of the ribosome. Forms the main docking site for trigger factor binding to the ribosome. The protein is Large ribosomal subunit protein uL23 of Akkermansia muciniphila (strain ATCC BAA-835 / DSM 22959 / JCM 33894 / BCRC 81048 / CCUG 64013 / CIP 107961 / Muc).